Here is a 72-residue protein sequence, read N- to C-terminus: Translational regulator CsrA (72 aa).

Belongs to the CsrA/RsmA family. As to quaternary structure, homodimer; the beta-strands of each monomer intercalate to form a hydrophobic core, while the alpha-helices form wings that extend away from the core.

It localises to the cytoplasm. Its function is as follows. A translational regulator that binds mRNA to regulate translation initiation and/or mRNA stability. Usually binds in the 5'-UTR at or near the Shine-Dalgarno sequence preventing ribosome-binding, thus repressing translation. Its main target seems to be the major flagellin gene, while its function is anatagonized by FliW. The sequence is that of Translational regulator CsrA from Ruminiclostridium cellulolyticum (strain ATCC 35319 / DSM 5812 / JCM 6584 / H10) (Clostridium cellulolyticum).